We begin with the raw amino-acid sequence, 577 residues long: Adenine deaminase (577 aa).

The protein belongs to the metallo-dependent hydrolases superfamily. Adenine deaminase family. Mn(2+) serves as cofactor.

The catalysed reaction is adenine + H2O + H(+) = hypoxanthine + NH4(+). The polypeptide is Adenine deaminase (Bacillus velezensis (strain DSM 23117 / BGSC 10A6 / LMG 26770 / FZB42) (Bacillus amyloliquefaciens subsp. plantarum)).